We begin with the raw amino-acid sequence, 542 residues long: Glutamyl-tRNA(Gln) amidotransferase subunit B, mitochondrial (542 aa).

The N-terminal 66 residues, 1-66 (MRVFRRFYQV…PNSHTSFFDI (66 aa)), are a transit peptide targeting the mitochondrion.

The protein belongs to the GatB/GatE family. GatB subfamily. Subunit of the heterotrimeric GatFAB amidotransferase (AdT) complex, composed of A, B and F subunits.

It is found in the mitochondrion. The enzyme catalyses L-glutamyl-tRNA(Gln) + L-glutamine + ATP + H2O = L-glutaminyl-tRNA(Gln) + L-glutamate + ADP + phosphate + H(+). Its function is as follows. Allows the formation of correctly charged Gln-tRNA(Gln) through the transamidation of misacylated Glu-tRNA(Gln) in the mitochondria. The reaction takes place in the presence of glutamine and ATP through an activated gamma-phospho-Glu-tRNA(Gln). In Zygosaccharomyces rouxii (strain ATCC 2623 / CBS 732 / NBRC 1130 / NCYC 568 / NRRL Y-229), this protein is Glutamyl-tRNA(Gln) amidotransferase subunit B, mitochondrial.